The following is a 205-amino-acid chain: Nitrophorin-7 (205 aa).

An N-terminal signal peptide occupies residues 1–20 (MELYTALLAVTILSPSSIVG). Disulfide bonds link cysteine 25–cysteine 144 and cysteine 62–cysteine 193. Aspartate 52 is a binding site for histamine. Heme-binding residues include histidine 80 and asparagine 91. Aspartate 154 serves as a coordination point for histamine.

It belongs to the calycin superfamily. Nitrophorin family. In terms of assembly, forms oligomers (at pH 5.5). It depends on heme b as a cofactor. In terms of tissue distribution, expressed in the endothelial cells of the salivary glands.

It localises to the secreted. It carries out the reaction 3 nitrite + 2 H(+) = 2 nitric oxide + nitrate + H2O. Converts nitrite as the sole substrate to form nitric oxide gas (NO). NO(2-) serves both as an electron donor and as an electron acceptor. Binds to negatively charged cell surfaces of activated platelets; binds to L-a-phosphatidyl-L-serine (PS)-bearing phospholipid membranes. Once bound on an activated platelet, NP7 releases its stored nitric oxide gas (NO) into the victim's tissues while feeding, resulting in vasodilation and inhibition of platelet aggregation. Also acts as an anticoagulant by blocking coagulation-factor binding sites. Has antihistamine activity; binds histamine with high affinity. The chain is Nitrophorin-7 from Rhodnius prolixus (Triatomid bug).